Consider the following 694-residue polypeptide: Elongation factor G (694 aa).

Positions 9–288 constitute a tr-type G domain; it reads DAIRNIGIMA…VIVKWLPSPL (280 aa). GTP is bound by residues 18–25, 82–86, and 136–139; these read AHIDAGKT, DTPGH, and NKMD.

The protein belongs to the TRAFAC class translation factor GTPase superfamily. Classic translation factor GTPase family. EF-G/EF-2 subfamily.

Its subcellular location is the cytoplasm. Functionally, catalyzes the GTP-dependent ribosomal translocation step during translation elongation. During this step, the ribosome changes from the pre-translocational (PRE) to the post-translocational (POST) state as the newly formed A-site-bound peptidyl-tRNA and P-site-bound deacylated tRNA move to the P and E sites, respectively. Catalyzes the coordinated movement of the two tRNA molecules, the mRNA and conformational changes in the ribosome. The polypeptide is Elongation factor G (fusA) (Chlamydia muridarum (strain MoPn / Nigg)).